We begin with the raw amino-acid sequence, 182 residues long: ADP-ribosylation factor 1 (182 aa).

A lipid anchor (N-myristoyl glycine) is attached at Gly-2. The tract at residues 3 to 16 (NVFANLFKGLFGKK) is important for the stable binding to the membranes. GTP contacts are provided by residues 24–32 (GLDAAGKTT), 126–129 (NKQD), and Ala-160.

This sequence belongs to the small GTPase superfamily. Arf family.

Its subcellular location is the golgi apparatus membrane. The protein resides in the cytoplasm. It is found in the cytosol. It catalyses the reaction GTP + H2O = GDP + phosphate + H(+). With respect to regulation, alternates between an inactive GDP-bound form and an active GTP-bound form. Activated by a guanine nucleotide-exchange factor (GEF) and inactivated by GTPase-activating protein (GAP). Functionally, small GTPase involved in protein trafficking between different compartments. Modulates vesicle budding and uncoating within the Golgi complex. In its GTP-bound form, triggers the recruitment of coatomer proteins to the Golgi membrane. The hydrolysis of ARF1-bound GTP, which is mediated by ARFGAPs proteins, is required for dissociation of coat proteins from Golgi membranes and vesicles. Has a role in eye development. Required for cleavage furrow ingression in embryonic cells. The protein is ADP-ribosylation factor 1 of Drosophila melanogaster (Fruit fly).